The chain runs to 149 residues: Deoxyuridine 5'-triphosphate nucleotidohydrolase (149 aa).

Residues 68–70 (RSG), asparagine 81, 85–87 (LID), and methionine 95 each bind substrate.

The protein belongs to the dUTPase family. Requires Mg(2+) as cofactor.

The enzyme catalyses dUTP + H2O = dUMP + diphosphate + H(+). It participates in pyrimidine metabolism; dUMP biosynthesis; dUMP from dCTP (dUTP route): step 2/2. Its function is as follows. This enzyme is involved in nucleotide metabolism: it produces dUMP, the immediate precursor of thymidine nucleotides and it decreases the intracellular concentration of dUTP so that uracil cannot be incorporated into DNA. The chain is Deoxyuridine 5'-triphosphate nucleotidohydrolase from Bordetella avium (strain 197N).